Reading from the N-terminus, the 290-residue chain is MPPVSFAAASDPAPRSALPIGVFDSGAGGLSVLAELQRALPQEDVLYLADTAHVPYGARSDEDIRDLTARAVAELVRRGVKAVVVACNTASAFSLTHLRERFELPIIGLVPAVKPAVAATKSGVVGVLATPGTLRGTLLADVIRQWAEPAGVRVMQAVSTELVPLVEAGKADSPEARVVLRDVLEPLAEAGADQLVLGCTHYPFLAGSIRAEFGDTFALVDSGAAVARHTRNVLSRGGLLRGGDRTGEVSYLTTSDPAHLRALLMTLRPGGADGASLPDPPSPRIELTTT.

Substrate-binding positions include 24–25 and 56–57; these read DS and YG. C87 acts as the Proton donor/acceptor in catalysis. 88–89 provides a ligand contact to substrate; it reads NT. Catalysis depends on C199, which acts as the Proton donor/acceptor. 200–201 is a substrate binding site; sequence TH. The tract at residues 271-290 is disordered; that stretch reads GADGASLPDPPSPRIELTTT.

This sequence belongs to the aspartate/glutamate racemases family.

It catalyses the reaction L-glutamate = D-glutamate. The protein operates within cell wall biogenesis; peptidoglycan biosynthesis. Provides the (R)-glutamate required for cell wall biosynthesis. This Deinococcus radiodurans (strain ATCC 13939 / DSM 20539 / JCM 16871 / CCUG 27074 / LMG 4051 / NBRC 15346 / NCIMB 9279 / VKM B-1422 / R1) protein is Glutamate racemase.